A 211-amino-acid polypeptide reads, in one-letter code: Urease accessory protein UreE (211 aa).

The disordered stretch occupies residues Glu170–Asp211. Basic and acidic residues predominate over residues His176–His196.

It belongs to the UreE family.

The protein resides in the cytoplasm. Functionally, involved in urease metallocenter assembly. Binds nickel. Probably functions as a nickel donor during metallocenter assembly. This is Urease accessory protein UreE from Ralstonia nicotianae (strain ATCC BAA-1114 / GMI1000) (Ralstonia solanacearum).